A 123-amino-acid chain; its full sequence is uncharacterized protein (123 aa).

This is an uncharacterized protein from Aquifex aeolicus (strain VF5).